The sequence spans 758 residues: Vitamin K-dependent gamma-carboxylase (758 aa).

Residues 1–29 (MAVHRGSARAAPASDKVQKNKPAQTSGLE) form a disordered region. The residue at position 2 (Ala2) is an N-acetylalanine. Residues 2 to 60 (AVHRGSARAAPASDKVQKNKPAQTSGLEQGSRMARIFGFEWADLSSWQSVVTLLNRPTD) lie on the Cytoplasmic side of the membrane. The chain crosses the membrane as a helical span at residues 61–81 (PANLAVFRFLFAFLMLLDIPQ). Topologically, residues 82–113 (ERGLSSLDRKYLDGLDVCRFPLLDALRPLPLD) are lumenal. Cys99 and Cys450 form a disulfide bridge. The helical transmembrane segment at 114–134 (WMYLVYTIMFLGALGMMLGLW) threads the bilayer. Over 135-136 (YR) the chain is Cytoplasmic. The chain crosses the membrane as a helical span at residues 137 to 157 (LSCMLFLLPYWYVFLLDKTSW). Over 158-292 (NNHSYLYGLL…VSYFHCMNSQ (135 aa)) the chain is Lumenal. A helical membrane pass occupies residues 293–313 (LFSIGMFPYVMLASSPLFCSA). The Cytoplasmic segment spans residues 314 to 361 (EWPRKLVARCPKRLQELLPAKAAPRPSASCVYKRARAKAGQKPGLRHH). Residues 362–382 (LGTVFTLLYLLEQLFLPYSHF) traverse the membrane as a helical segment. The Lumenal portion of the chain corresponds to 383 to 758 (LTQGYNNWTN…PDSEHVHSEL (376 aa)). The interval 727-758 (PFEPVDESSASNTDSSDPHPSEPDSEHVHSEL) is disordered. The span at 742-758 (SDPHPSEPDSEHVHSEL) shows a compositional bias: basic and acidic residues.

The protein belongs to the vitamin K-dependent gamma-carboxylase family. Monomer. Interacts with CALU.

Its subcellular location is the endoplasmic reticulum membrane. The enzyme catalyses 4-carboxy-L-glutamyl-[protein] + 2,3-epoxyphylloquinone + H2O + H(+) = phylloquinol + L-glutamyl-[protein] + CO2 + O2. Functionally, mediates the vitamin K-dependent carboxylation of glutamate residues to calcium-binding gamma-carboxyglutamate (Gla) residues with the concomitant conversion of the reduced hydroquinone form of vitamin K to vitamin K epoxide. Catalyzes gamma-carboxylation of various proteins, such as blood coagulation factors (F2, F7, F9 and F10), osteocalcin (BGLAP) or matrix Gla protein (MGP). The protein is Vitamin K-dependent gamma-carboxylase (Ggcx) of Rattus norvegicus (Rat).